We begin with the raw amino-acid sequence, 197 residues long: uncharacterized protein (197 aa).

A helical transmembrane segment spans residues 7–27 (PISVGQMVLICIFILIILFVI).

The protein belongs to the IIV-6 307L family.

The protein localises to the membrane. This is an uncharacterized protein from Acheta domesticus (House cricket).